The primary structure comprises 418 residues: MTKKAVLIGINYPGTKAELRGCVNDVRRMYKCLVERYGFSEENITVLIDTDESSTQPTGKNIRRALADLVESADSGDVLVVHYSGHGTRLPAETGEDDDTGFDECIVPCDMNLITDDDFRDLVDKVPPGCRMTIISDSCHSGGLIDEAKEQIGESTKKEAEDEDESEESSSRFGFRKFLRSKVEGAIESRGFHIGGNKKDEDEAEEIETKEIELEDGETIHAKDKSLPLQTLIDILKQQTGNDNIEVGKIRPSLFDAFGDDSSPKVKKFMKVILGKLQAGNGEEGGLMGMLGKLASGFLEGKLNDEDYVKPAMQTHVGSKEEVYAGGSRGSVPLPDSGILISGCQTDQTSADATPAGKPTEAYGAMSNSIQTILEETDGEISNREMVTRARKALKKQGFTQQPGLYCHDGYANAPFIC.

Active-site residues include H86 and C139. C139 carries the post-translational modification S-nitrosocysteine. The interval 153–172 (GESTKKEAEDEDESEESSSR) is disordered.

The protein belongs to the peptidase C14B family. Post-translationally, the two subunits are derived from the precursor sequence by an autocatalytic mechanism. In terms of tissue distribution, expressed in roots, cotyledons, leaves, cauline leaves, pollen and embryos.

The protein resides in the cytoplasm. Its subcellular location is the cytosol. With respect to regulation, activated by Ca(2+) which induces self-processing and accelerates the rate of the enzyme activity, but has no effect on Km. Functionally, cysteine protease that cleaves specifically after arginine or lysine residues. Does not cleave caspase-specific substrates. Plays a positive regulatory role in biotic and abiotic stress-induced programmed cell death. In Arabidopsis thaliana (Mouse-ear cress), this protein is Metacaspase-4 (AMC4).